Reading from the N-terminus, the 466-residue chain is Coproporphyrinogen III oxidase (466 aa).

Residues 9-14, 34-35, K42, 56-59, V254, and 446-448 each bind FAD; these read GAGITG, EA, GPES, and VGL.

It belongs to the protoporphyrinogen/coproporphyrinogen oxidase family. Coproporphyrinogen III oxidase subfamily. FAD is required as a cofactor.

It is found in the cytoplasm. The enzyme catalyses coproporphyrinogen III + 3 O2 = coproporphyrin III + 3 H2O2. It participates in porphyrin-containing compound metabolism; protoheme biosynthesis. The generation of protoporphyrin IX, but not coproporphyrin III, is stimulated by heme-bound HemQ. This stimulatory effect is mediated by superoxide. Inhibited by acifluorfen analogs. Its function is as follows. Involved in coproporphyrin-dependent heme b biosynthesis. Catalyzes the oxidation of coproporphyrinogen III to coproporphyrin III. Can also oxidize protoporphyrinogen IX. This chain is Coproporphyrinogen III oxidase, found in Staphylococcus aureus (strain NCTC 8325 / PS 47).